The following is a 368-amino-acid chain: MSESQKKVIVGMSGGVDSSVSAYLLLQQGYKVEGLFMKNWEEDDGEEYCTAAADLADAQAVCDKLGIELHTVNFAAEYWDNVFELFLEEYKAGRTPNPDILCNKEIKFKAFLEFAAEDLGADYIATGHYVRRADVDGKSQLLRGLDGNKDQSYFLYTLSHEQIAQSLFPVGELEKPQVRKIAEELDLITAKKKDSTGICFIGERKFRDFLGRYLPAQPGKILTVDGEEIGTHQGLMYHTLGQRKGLGIGGTKEGSEDPWYVVDKDVENNILIVAQGHDHPRLMSVGLIAQQLHWVDREPLQGTLRCTVKTRYRQTDIPCTVTALDEDRIEVRFDEPVAAVTPGQSAVFYLGEVCLGGGIIEQRLPLQS.

ATP is bound by residues 11–18 and M37; that span reads GMSGGVDS. The tract at residues 97–99 is interaction with target base in tRNA; the sequence is NPD. C102 (nucleophile) is an active-site residue. A disulfide bond links C102 and C199. G127 is a binding site for ATP. An interaction with tRNA region spans residues 149–151; the sequence is KDQ. C199 (cysteine persulfide intermediate) is an active-site residue. Residues 311–312 are interaction with tRNA; the sequence is RY.

It belongs to the MnmA/TRMU family. As to quaternary structure, interacts with TusE.

The protein localises to the cytoplasm. It carries out the reaction S-sulfanyl-L-cysteinyl-[protein] + uridine(34) in tRNA + AH2 + ATP = 2-thiouridine(34) in tRNA + L-cysteinyl-[protein] + A + AMP + diphosphate + H(+). Its function is as follows. Catalyzes the 2-thiolation of uridine at the wobble position (U34) of tRNA(Lys), tRNA(Glu) and tRNA(Gln), leading to the formation of s(2)U34, the first step of tRNA-mnm(5)s(2)U34 synthesis. Sulfur is provided by IscS, via a sulfur-relay system. Binds ATP and its substrate tRNAs. The polypeptide is tRNA-specific 2-thiouridylase MnmA (Klebsiella pneumoniae (strain 342)).